The chain runs to 375 residues: MQRLQICVYIYLFVLIVAGPVDLSENSEQKENVEKEGLCNACMWRQNTKSSRIEAIKIQILSKLRLETAPNISRDAVRQLLPRAPPLRELIDQYDVQRDDSSDGSLEDDDYHATTETVIAMPAETDLLMQVEGKPKCCFFKFSSKIQYNKVVKAQLWIYLRPVKTPTTVFVQILRLIKPMKDGTRYTGIRSLKLDMNPGTGIWQSIDVKTVLQNWLKQPESNLGIEIKALDENGHDLAVTFPGPGEDGLNPFLEVKVTDTPKRSRRDFGLDCDEHSTESRCCRYPLTVDFEAFGWDWIIAPKRYKANYCSGECEFVFLQKYPHTHLVHQANPRGSAGPCCTPTKMSPINMLYFNGKEQIIYGKIPAMVVDRCGCS.

The signal sequence occupies residues 1-18 (MQRLQICVYIYLFVLIVA). Residues 19-266 (GPVDLSENSE…VTDTPKRSRR (248 aa)) constitute a propeptide that is removed on maturation. N71 is a glycosylation site (N-linked (GlcNAc...) asparagine). Disulfide bonds link C272-C282, C281-C340, C309-C372, and C313-C374.

Belongs to the TGF-beta family. As to quaternary structure, homodimer; disulfide-linked. Interacts with WFIKKN2, leading to inhibit its activity. Interacts with FSTL3. Post-translationally, synthesized as large precursor molecule that undergoes proteolytic cleavage to generate an N-terminal propeptide and a disulfide linked C-terminal dimer, which is the biologically active molecule. The circulating form consists of a latent complex of the C-terminal dimer and other proteins, including its propeptide, which maintain the C-terminal dimer in a latent, inactive state. Ligand activation requires additional cleavage of the prodomain by a tolloid-like metalloproteinase.

The protein localises to the secreted. Functionally, acts specifically as a negative regulator of skeletal muscle growth. This is Growth/differentiation factor 8 (MSTN) from Canis lupus familiaris (Dog).